A 194-amino-acid polypeptide reads, in one-letter code: MQLTLASTSPAREKVLNAAGVIPRKVSPGVDEEAAVADLVNPTPAQYVQHLATAKARAVDGELVLGGDSMLLIDGELQGKPHTREETVRRWRQQRGKRAELVTGHALFDAATGQIYEEVVATQIQFAEVSERAIEAYAATGEPLECAGAFTLEALGGWFIESIDGHPSAVIGLSLPALRRGLDYFGYDFSDLWG.

Asp68 acts as the Proton acceptor in catalysis.

The protein belongs to the Maf family. A divalent metal cation serves as cofactor.

The protein resides in the cytoplasm. The catalysed reaction is a ribonucleoside 5'-triphosphate + H2O = a ribonucleoside 5'-phosphate + diphosphate + H(+). It catalyses the reaction a 2'-deoxyribonucleoside 5'-triphosphate + H2O = a 2'-deoxyribonucleoside 5'-phosphate + diphosphate + H(+). Functionally, nucleoside triphosphate pyrophosphatase. May have a dual role in cell division arrest and in preventing the incorporation of modified nucleotides into cellular nucleic acids. The sequence is that of Nucleoside triphosphate pyrophosphatase from Corynebacterium jeikeium (strain K411).